The chain runs to 476 residues: MRIDRFEFAFTFNDVILLPGKTEIEPSNVDLTTRIGNIALSIPILSSPMDTVTEEEMSIAMARMGGLGILHRNCSVEEQVNMAKAVKRAESFIIRDVITVSPEDSVEEARRLMREHGISGLPVIVGRKLVGIVTRRDVYFAENGSLLVKDIMTKDPITVGPEITPQEARKIMARYKIEKLPVVSESGELIGLVTAKDVFYRESHPFATRDEEGRLRVGAAISPFDIDRAKTLAPYVDVLVTDVAHFHNENVISATKRIIDEVGVPVIAGNIGTYEAAEEAITRLDIIGLRVGIGSGSICTTGEVTGVAAPTLYAVASASEAVRKYSKDVAVIADGGIRGPGEAAKAFAMGADAVMLGYALAGTKEAPGSTMMIGGKMYKIYRGMGSPSARSKRFAMDRYSKPSKDIAEGIEGLVPYRGDVTTVVDRFVAGLKAAFGYVGAANISEMKSKARVALISHSGMSEIAPHDVKPLEKISD.

CBS domains follow at residues isoleucine 93–isoleucine 151 and methionine 152–glutamate 211. NAD(+) contacts are provided by residues aspartate 242 and glycine 292–glycine 294. The K(+) site is built by glycine 294 and glycine 296. Residue serine 297 participates in IMP binding. Cysteine 299 is a K(+) binding site. Cysteine 299 acts as the Thioimidate intermediate in catalysis. IMP is bound by residues aspartate 334–glycine 336, glycine 357–tyrosine 358, and tyrosine 381–glycine 385. The Proton acceptor role is filled by arginine 398. Position 408 (glutamate 408) interacts with IMP. Glutamate 462 lines the K(+) pocket.

The protein belongs to the IMPDH/GMPR family. As to quaternary structure, homotetramer. It depends on K(+) as a cofactor.

It carries out the reaction IMP + NAD(+) + H2O = XMP + NADH + H(+). Its pathway is purine metabolism; XMP biosynthesis via de novo pathway; XMP from IMP: step 1/1. Its activity is regulated as follows. Mycophenolic acid (MPA) is a non-competitive inhibitor that prevents formation of the closed enzyme conformation by binding to the same site as the amobile flap. In contrast, mizoribine monophosphate (MZP) is a competitive inhibitor that induces the closed conformation. MPA is a potent inhibitor of mammalian IMPDHs but a poor inhibitor of the bacterial enzymes. MZP is a more potent inhibitor of bacterial IMPDH. Its function is as follows. Catalyzes the conversion of inosine 5'-phosphate (IMP) to xanthosine 5'-phosphate (XMP), the first committed and rate-limiting step in the de novo synthesis of guanine nucleotides, and therefore plays an important role in the regulation of cell growth. The protein is Inosine-5'-monophosphate dehydrogenase of Korarchaeum cryptofilum (strain OPF8).